An 807-amino-acid chain; its full sequence is Zinc finger protein 594 (807 aa).

The tract at residues Met-1–Lys-23 is disordered. C2H2-type zinc fingers lie at residues Tyr-127 to His-149, Tyr-155 to His-177, Tyr-183 to His-205, Tyr-211 to His-233, Tyr-239 to His-261, Tyr-267 to His-289, Leu-295 to His-317, and Tyr-323 to His-345. The C2H2-type 9; degenerate zinc-finger motif lies at Glu-348–His-370. 6 C2H2-type zinc fingers span residues Tyr-376–His-398, Tyr-404–His-426, Cys-432–His-454, Tyr-460–His-482, Tyr-488–His-510, and Tyr-516–His-538. A C2H2-type 16; degenerate zinc finger spans residues Leu-543 to His-562. C2H2-type zinc fingers lie at residues Tyr-568–His-590, Tyr-596–His-618, Tyr-624–His-646, Tyr-652–His-674, Tyr-680–His-702, and Tyr-708–His-730. The C2H2-type 23; degenerate zinc-finger motif lies at Glu-733–His-755. A C2H2-type 24 zinc finger spans residues Tyr-761 to His-783.

This sequence belongs to the krueppel C2H2-type zinc-finger protein family.

The protein localises to the nucleus. Its function is as follows. May be involved in transcriptional regulation. This is Zinc finger protein 594 (ZNF594) from Homo sapiens (Human).